We begin with the raw amino-acid sequence, 322 residues long: Endochitinase (322 aa).

Residues 1–21 (MKMRYCVLVSVLAILVIRGSA) form the signal peptide. The 41-residue stretch at 22–62 (ENCGRQAGGALCPGGQCCSKWGWCGTTPDHCGTDCQSQCGG) folds into the Chitin-binding type-1 domain. 4 disulfides stabilise this stretch: Cys24–Cys39, Cys33–Cys45, Cys38–Cys52, and Cys56–Cys60.

This sequence belongs to the glycosyl hydrolase 19 family. Chitinase class I subfamily.

It catalyses the reaction Random endo-hydrolysis of N-acetyl-beta-D-glucosaminide (1-&gt;4)-beta-linkages in chitin and chitodextrins.. Functionally, defense against chitin-containing fungal pathogens. The chain is Endochitinase from Actinidia chinensis var. chinensis (Chinese soft-hair kiwi).